A 380-amino-acid polypeptide reads, in one-letter code: Cytochrome b (380 aa).

The next 4 membrane-spanning stretches (helical) occupy residues 34–54, 78–99, 114–134, and 179–199; these read FGSL…LLAA, WLLR…YLHI, WNTG…GYVL, and FFAL…IHLT. Heme b is bound by residues His-84 and His-98. Residues His-183 and His-197 each contribute to the heme b site. An a ubiquinone-binding site is contributed by His-202. 4 helical membrane-spanning segments follow: residues 227–247, 289–309, 321–341, and 348–368; these read LKDI…ALFH, LGGV…PFLH, LSQL…WIGS, and FIII…VLFP.

It belongs to the cytochrome b family. The cytochrome bc1 complex contains 11 subunits: 3 respiratory subunits (MT-CYB, CYC1 and UQCRFS1), 2 core proteins (UQCRC1 and UQCRC2) and 6 low-molecular weight proteins (UQCRH/QCR6, UQCRB/QCR7, UQCRQ/QCR8, UQCR10/QCR9, UQCR11/QCR10 and a cleavage product of UQCRFS1). This cytochrome bc1 complex then forms a dimer. Requires heme b as cofactor.

Its subcellular location is the mitochondrion inner membrane. In terms of biological role, component of the ubiquinol-cytochrome c reductase complex (complex III or cytochrome b-c1 complex) that is part of the mitochondrial respiratory chain. The b-c1 complex mediates electron transfer from ubiquinol to cytochrome c. Contributes to the generation of a proton gradient across the mitochondrial membrane that is then used for ATP synthesis. The protein is Cytochrome b (MT-CYB) of Trogon curucui (Blue-crowned trogon).